Reading from the N-terminus, the 454-residue chain is tRNA modification GTPase MnmE (454 aa).

(6S)-5-formyl-5,6,7,8-tetrahydrofolate is bound by residues Arg23, Glu80, and Lys120. Residues 216–377 (GMKVVIAGRP…LRNNLKQSMG (162 aa)) enclose the TrmE-type G domain. Asn226 provides a ligand contact to K(+). Residues 226–231 (NAGKSS), 245–251 (TDIAGTT), 270–273 (DTAG), 335–338 (NKAD), and 358–360 (SAR) contribute to the GTP site. Residue Ser230 coordinates Mg(2+). Thr245, Ile247, and Thr250 together coordinate K(+). Position 251 (Thr251) interacts with Mg(2+). (6S)-5-formyl-5,6,7,8-tetrahydrofolate is bound at residue Lys454.

The protein belongs to the TRAFAC class TrmE-Era-EngA-EngB-Septin-like GTPase superfamily. TrmE GTPase family. Homodimer. Heterotetramer of two MnmE and two MnmG subunits. K(+) serves as cofactor.

It is found in the cytoplasm. Its function is as follows. Exhibits a very high intrinsic GTPase hydrolysis rate. Involved in the addition of a carboxymethylaminomethyl (cmnm) group at the wobble position (U34) of certain tRNAs, forming tRNA-cmnm(5)s(2)U34. The polypeptide is tRNA modification GTPase MnmE (Salmonella paratyphi A (strain ATCC 9150 / SARB42)).